We begin with the raw amino-acid sequence, 919 residues long: Translocase of chloroplast 101, chloroplastic (919 aa).

Disordered stretches follow at residues 20 to 47 (SASR…VIEG) and 64 to 211 (VDDE…NETR). Over residues 73–88 (SENKAVVETEKVESKP) the composition is skewed to basic and acidic residues. The span at 96-128 (FAEEDGDSDADAEDEDDEDDEDDDEDDDDEDDK) shows a compositional bias: acidic residues. Positions 182 to 207 (QRPNGAPSTQLTATTEENANSDTAEG) are enriched in polar residues. Positions 284–513 (DFACTILVLG…KLQETATPGR (230 aa)) constitute an AIG1-type G domain. Residues 293 to 300 (GKTGVGKS) are G1. 296 to 301 (GVGKSA) is a GTP binding site. Serine 300 contacts Mg(2+). Residues 319 to 323 (PSTNK) form a G2 region. A G3 region spans residues 340-343 (DTPG). Positions 412–415 (THAS) are G4. Residues histidine 413 and 461-462 (EN) each bind GTP. Residues 461-463 (ENH) form a G5 region. Disordered stretches follow at residues 540–585 (LPDE…LTKE) and 611–650 (RRRK…PMPD). Positions 543–567 (EQLDESDESDDDEEEEDSEADDYDE) are enriched in acidic residues. A compositionally biased stretch (basic and acidic residues) spans 574–585 (LSKEELEELTKE). Over residues 629 to 638 (AQPDEADDEA) the composition is skewed to acidic residues. Positions 641–650 (PAAVPVPMPD) are enriched in low complexity. Residues 893–914 (MVLIGIVPILRSLINCRFGFGG) traverse the membrane as a helical segment.

This sequence belongs to the TRAFAC class TrmE-Era-EngA-EngB-Septin-like GTPase superfamily. AIG1/Toc34/Toc159-like paraseptin GTPase family. TOC159 subfamily. As to quaternary structure, part of the TOC core complex. Requires Mg(2+) as cofactor.

Its subcellular location is the plastid. The protein resides in the chloroplast outer membrane. Functionally, GTPase involved in protein precursor import into chloroplasts. Seems to recognize chloroplast-destined precursor proteins and regulate their presentation to the translocation channel through GTP hydrolysis. Probably specialized in the import of nuclear encoded non-photosynthetic preproteins from the cytoplasm to the chloroplast. This chain is Translocase of chloroplast 101, chloroplastic, found in Physcomitrium patens (Spreading-leaved earth moss).